We begin with the raw amino-acid sequence, 453 residues long: Gastrin/cholecystokinin type B receptor (453 aa).

The Extracellular segment spans residues 1–57 (MELLKLNRSAQGSGAGPGASLCRAGGALLNSSGAGNLSCEPPRLRGAGTRELELAIR). N7, N30, and N36 each carry an N-linked (GlcNAc...) asparagine glycan. The helical transmembrane segment at 58–79 (VTLYAVIFLMSVGGNVLIIVVL) threads the bilayer. Residues 80-87 (GLSRRLRT) lie on the Cytoplasmic side of the membrane. Residues 88 to 109 (VTNAFLLSLAVSDLLLAVACMP) form a helical membrane-spanning segment. Over 110–131 (FTLLPNLMGTFIFGTVVCKAVS) the chain is Extracellular. C127 and C206 are disulfide-bonded. The chain crosses the membrane as a helical span at residues 132–150 (YLMGVSVSVSTLSLVAIAL). Residues 151–170 (ERYSAICRPLQARVWQTRSH) lie on the Cytoplasmic side of the membrane. Residues 171–189 (AARVIIATWMLSGLLMVPY) form a helical membrane-spanning segment. Topologically, residues 190–220 (PVYTAVQPAGGARALQCVHRWPSARVRQTWS) are extracellular. A helical transmembrane segment spans residues 221–243 (VLLLLLLFFVPGVVMAVAYGLIS). At 244 to 339 (RELYLGLRFD…KLLAKKRVVR (96 aa)) the chain is on the cytoplasmic side. Residues 258–286 (SESRVRSQGGLRGGAGPGPAPPNGSCRPE) are disordered. A helical transmembrane segment spans residues 340-361 (MLLVIVVLFFLCWLPLYSANTW). At 362–379 (RAFDSSGAHRALSGAPIS) the chain is on the extracellular side. The chain crosses the membrane as a helical span at residues 380-400 (FIHLLSYASACVNPLVYCFMH). At 401–453 (RRFRQACLETCARCCPRPPRARPRPLPDEDPPTPSIASLSRLSYTTISTLGPG) the chain is on the cytoplasmic side. C414 is lipidated: S-palmitoyl cysteine. Positions 422–453 (RPRPLPDEDPPTPSIASLSRLSYTTISTLGPG) are disordered. Over residues 435 to 453 (SIASLSRLSYTTISTLGPG) the composition is skewed to polar residues.

It belongs to the G-protein coupled receptor 1 family. As to expression, parietal cells, pancreas, brain and various neoplastic tissues.

Its subcellular location is the cell membrane. Receptor for gastrin and cholecystokinin. The CCK-B receptors occur throughout the central nervous system where they modulate anxiety, analgesia, arousal, and neuroleptic activity. This receptor mediates its action by association with G proteins that activate a phosphatidylinositol-calcium second messenger system. The chain is Gastrin/cholecystokinin type B receptor (CCKBR) from Canis lupus familiaris (Dog).